Reading from the N-terminus, the 873-residue chain is Nitrate reductase [NADPH] (873 aa).

The disordered stretch occupies residues 30–61 (TELDTADIPLPPPSKEPTEVLSLDKTTPDSHV). C150 contributes to the Mo-molybdopterin binding site. Positions 512 to 587 (TRIIDLEEFK…MPDYHIGTLD (76 aa)) constitute a Cytochrome b5 heme-binding domain. H547 and H570 together coordinate heme. Residues 616–729 (KAWTKATLTK…KGPTGRFEYL (114 aa)) enclose the FAD-binding FR-type domain. Residues 672 to 675 (RSYT), 689 to 693 (LIKIY), 703 to 705 (KMT), and T756 each bind FAD. 843-852 (MVLVCGPEAM) lines the NADP(+) pocket.

The protein belongs to the nitrate reductase family. Homodimer. It depends on FAD as a cofactor. Heme serves as cofactor. The cofactor is Mo-molybdopterin.

It carries out the reaction nitrite + NADP(+) + H2O = nitrate + NADPH + H(+). Nitrate reductase is a key enzyme involved in the first step of nitrate assimilation in plants, fungi and bacteria. The sequence is that of Nitrate reductase [NADPH] (niaD) from Emericella nidulans (strain FGSC A4 / ATCC 38163 / CBS 112.46 / NRRL 194 / M139) (Aspergillus nidulans).